The primary structure comprises 479 residues: MDKQPATSWSIHTRPEIIAKYEIFERVGSGAYADVYRARRLSDGLIVALKEIFDYQSAFREIDALTILNGSPNVVVMHEYFWREEENAVLVLEFLRSDLAAVIRDGKRKKKVEGGDGFSVGEIKRWMIQILTGVDACHRNLIVHRDLKPGNMLISDDGVLKLADFGQARILMEHDIVASDENQQAYKLEDKDGETSEPPEVIPDYENSPRQGSDGQEREAMSKDEYFRQVEELKAKQVVRDDTDKDSNVHDGDISCLATCTVSEMDDDLGRNSFSYDADEAVDDTQGLMTSCVGTRWFRPPELLYGSTMYGLEVDLWSLGCVFAELLSLEPLFPGISDIDQISRVTNVLGNLNEEVWPGCVDLPDYKSISFAKVESPLGIEGCLPNHSGDVISLLKKLICYDPASRATTMEMLNDKYLSEEPLPVPVSELYVPPTMSGPDEDSPRKWNDYREMDSDSDFDGFGPMNVKPTSSGFTIEFP.

One can recognise a Protein kinase domain in the interval 21–418; it reads YEIFERVGSG…TMEMLNDKYL (398 aa). ATP is bound by residues 27–35 and Lys-50; that span reads VGSGAYADV. At Tyr-32 the chain carries Phosphotyrosine. Residue Asp-146 is the Proton acceptor of the active site. Residues Ser-179, Ser-208, and Ser-247 each carry the phosphoserine modification. Residues 187–221 are disordered; that stretch reads KLEDKDGETSEPPEVIPDYENSPRQGSDGQEREAM. Thr-290 bears the Phosphothreonine mark. Residues 434–479 are disordered; the sequence is PTMSGPDEDSPRKWNDYREMDSDSDFDGFGPMNVKPTSSGFTIEFP. The segment covering 442–454 has biased composition (basic and acidic residues); that stretch reads DSPRKWNDYREMD. Over residues 468–479 the composition is skewed to polar residues; sequence KPTSSGFTIEFP.

Belongs to the protein kinase superfamily. CMGC Ser/Thr protein kinase family. CDC2/CDKX subfamily. As to expression, highly expressed in suspension cell culture. Expressed at low levels in all plant organs.

The enzyme catalyses L-seryl-[protein] + ATP = O-phospho-L-seryl-[protein] + ADP + H(+). It carries out the reaction L-threonyl-[protein] + ATP = O-phospho-L-threonyl-[protein] + ADP + H(+). The catalysed reaction is [DNA-directed RNA polymerase] + ATP = phospho-[DNA-directed RNA polymerase] + ADP + H(+). In terms of biological role, CDK-activating kinase that modulates CDKD-2 and CDKD-3 activities by phosphorylation of the T-loop. Activates CDKD-2 C-terminal domain (CTD) kinase activity. Activates CDKA-1 probably by phosphorylation. Possesses a CDK kinase activity independently of association with cyclin CYCH1-1. Phosphorylates the CTD of the large subunit of RNA polymerase II. The protein is Cyclin-dependent kinase F-1 (CDKF-1) of Arabidopsis thaliana (Mouse-ear cress).